The following is a 534-amino-acid chain: NEDD8-activating enzyme E1 regulatory subunit (534 aa).

Ala-2 bears the N-acetylalanine mark. Lys-6 and Lys-341 each carry N6-acetyllysine. The segment at 331-344 is interaction with UBA3; the sequence is DMIADSGKYIKLQN.

Belongs to the ubiquitin-activating E1 family. ULA1 subfamily. As to quaternary structure, heterodimer of UBA3 and NAE1. The complex binds NEDD8 and UBE2M. Binds APP and TP53BP2. Ubiquitinated by TRIP12, leading to its degradation by the proteasome. As to expression, ubiquitous in fetal tissues. Expressed throughout the adult brain.

The protein localises to the cell membrane. Its pathway is protein modification; protein neddylation. With respect to regulation, binding of TP53BP2 to the regulatory subunit NAE1 decreases neddylation activity. Regulatory subunit of the dimeric UBA3-NAE1 E1 enzyme. E1 activates NEDD8 by first adenylating its C-terminal glycine residue with ATP, thereafter linking this residue to the side chain of the catalytic cysteine, yielding a NEDD8-UBA3 thioester and free AMP. E1 finally transfers NEDD8 to the catalytic cysteine of UBE2M. Necessary for cell cycle progression through the S-M checkpoint. Overexpression of NAE1 causes apoptosis through deregulation of NEDD8 conjugation. The covalent attachment of NEDD8 to target proteins is known as 'neddylation' and the process is involved in the regulation of cell growth, viability and development. The chain is NEDD8-activating enzyme E1 regulatory subunit (NAE1) from Homo sapiens (Human).